Here is an 856-residue protein sequence, read N- to C-terminus: MSASVTSSDGRGPASPTSSSTGASTNPATSGLAAALKGATLAFQHQQRTAAKGSDTAVPRPHGGSRVPTPGTGSVSTSTSRTVGGSNGARLAATLAAREHSPPTTSKNEASRVVTSTPSSSSSVGSAGRTNRQELHGQATGGSSQQQQQQQHVEERANDHAPSKRPAMRSRRPSLASLSSQAVDNSHSHPPTPASAKPSSEPKSVSWIAATLAATSIAPTTSLVAMFDGKQEEAETATKKKKKKKPRPASKTQHHQTLTSPSPTPSEGLSIENQCGTGGVPSVASGKSKVAPKPKPKPRRDISLSTVESIKSSTGAMGRDGKSSNQEQGETRNRNGDVRDKPSREGGKVTVTGAKDIVFEGTSERRSQQKVPATPRSVQSKQGVEVPTDKRPSTPPVSQHAQISETTIISPQPRRVVSTPRLESSPAVPKTYKTVTNPRPDNKPTIRKSSRVVSPSVDQSQTIRQSAETGLGDRHTSRNSTSSDETFVSASSSPSPRPQTPTKELERVRPRLDRANTSTSSRASRVSTPASVRSPASQTRPSPVLRPGTGLYSYSTGASPTPEMSLDSLTNAMIASNLASSRLTALTQTSLESPGLPPVPPPRRGHRHHHLPHPHLRHRTQSPPHARPLIPQRTADSLPVRTGPSRQTEHTQPASLLKTLRAPRSLSDDEDLRLQTHRHRKKHLGGKKHAHNEGARRRWRDEMTIRQRRRYEAVWASNRGLFLRPGFAFEHPENWQPLPPPDDSLGQVDLSRAWESPEADLVVNVVVRDIWSRSRLPVDELAEVWELVDRRKCGALDKQEFVVGMWLIDQRLRGRKIPTVVGEGVWESAMDRVLSVNVKAPKAHKGRTKGHLKGVF.

Disordered regions lie at residues 1–204 (MSAS…EPKS), 230–563 (KQEE…PTPE), and 589–672 (TSLE…DEDL). Composition is skewed to low complexity over residues 12 to 42 (GPAS…ATLA), 67 to 84 (VPTP…RTVG), and 111 to 130 (SRVV…AGRT). A compositionally biased stretch (basic and acidic residues) spans 152-162 (HVEERANDHAP). A compositionally biased stretch (low complexity) spans 194–204 (ASAKPSSEPKS). Basic residues predominate over residues 239-254 (KKKKKKKPRPASKTQH). Composition is skewed to polar residues over residues 255 to 275 (HQTL…ENQC) and 303 to 315 (SLST…SSTG). Basic and acidic residues predominate over residues 329–347 (GETRNRNGDVRDKPSREGG). Polar residues-rich tracts occupy residues 396–410 (PVSQ…TIIS), 451–468 (RVVS…QSAE), and 478–488 (RNSTSSDETFV). Residues 503–514 (KELERVRPRLDR) show a composition bias toward basic and acidic residues. Residues 517-535 (TSTSSRASRVSTPASVRSP) show a composition bias toward low complexity. Residues 603–620 (RRGHRHHHLPHPHLRHRT) are compositionally biased toward basic residues. Residues 644-654 (PSRQTEHTQPA) are compositionally biased toward polar residues. The EH domain occupies 743–832 (DSLGQVDLSR…EGVWESAMDR (90 aa)).

The protein belongs to the IRS4 family.

Functionally, positive regulator of phosphatidylinositol 4,5-bisphosphate turnover and negatively regulates signaling through the cell integrity pathway. Involved in rDNA silencing. This Neurospora crassa (strain ATCC 24698 / 74-OR23-1A / CBS 708.71 / DSM 1257 / FGSC 987) protein is Increased rDNA silencing protein 4 (irs-4).